The primary structure comprises 416 residues: Prostacyclin receptor (416 aa).

Topologically, residues Met-1 to Gly-45 are extracellular. Cystine bridges form between Cys-34–Cys-194 and Cys-121–Cys-199. Asn-36 carries an N-linked (GlcNAc...) asparagine glycan. A helical membrane pass occupies residues Pro-46 to Leu-67. Over Gly-68–Val-80 the chain is Cytoplasmic. The helical transmembrane segment at Leu-81 to Ala-105 threads the bilayer. The Extracellular segment spans residues Arg-106 to Thr-123. Residues Phe-124–Val-144 traverse the membrane as a helical segment. Residues Glu-145–Arg-163 are Cytoplasmic-facing. A helical transmembrane segment spans residues Cys-164–Leu-187. At Gly-188–Leu-215 the chain is on the extracellular side. The helical transmembrane segment at Ala-216 to Leu-237 threads the bilayer. Residues Ser-238 to Val-264 are Cytoplasmic-facing. A helical membrane pass occupies residues Tyr-265–Phe-289. Topologically, residues Thr-290 to Asp-302 are extracellular. Residues Leu-303–Phe-323 traverse the membrane as a helical segment. Residues Arg-324–Cys-416 lie on the Cytoplasmic side of the membrane. At Ser-366 the chain carries Phosphoserine. Cys-413 is modified (cysteine methyl ester). The S-farnesyl cysteine moiety is linked to residue Cys-413. The propeptide at Ser-414–Cys-416 is removed in mature form.

It belongs to the G-protein coupled receptor 1 family. In terms of assembly, interacts (non-isoprenylated C-terminus) with PDZK1. In terms of processing, isoprenylation does not influence ligand binding but is required for efficient coupling to the effectors adenylyl cyclase and phospholipase C.

The protein localises to the cell membrane. Its function is as follows. Receptor for prostacyclin (prostaglandin I2 or PGI2). The activity of this receptor is mediated by G(s) proteins which activate adenylate cyclase. This chain is Prostacyclin receptor (Ptgir), found in Rattus norvegicus (Rat).